We begin with the raw amino-acid sequence, 310 residues long: Cysteine synthase (310 aa).

K46 is modified (N6-(pyridoxal phosphate)lysine). Residues N76, 180-184, and S268 contribute to the pyridoxal 5'-phosphate site; that span reads GTGGT.

Belongs to the cysteine synthase/cystathionine beta-synthase family. As to quaternary structure, homodimer. Pyridoxal 5'-phosphate is required as a cofactor.

The enzyme catalyses O-acetyl-L-serine + hydrogen sulfide = L-cysteine + acetate. It participates in amino-acid biosynthesis; L-cysteine biosynthesis; L-cysteine from L-serine: step 2/2. This chain is Cysteine synthase (cysK), found in Staphylococcus aureus (strain Mu50 / ATCC 700699).